We begin with the raw amino-acid sequence, 322 residues long: Lymphatic vessel endothelial hyaluronic acid receptor 1 (322 aa).

The signal sequence occupies residues 1–19; the sequence is MARCFSLVLLLTSIWTTRL. At 20-238 the chain is on the extracellular side; sequence LVQGSLRAEE…EAAGFGGVPT (219 aa). The region spanning 40–130 is the Link domain; the sequence is GITLVSKKAN…SRQFAAYCYN (91 aa). An N-linked (GlcNAc...) asparagine glycan is attached at asparagine 53. 2 disulfide bridges follow: cysteine 61–cysteine 128 and cysteine 85–cysteine 106. N-linked (GlcNAc...) asparagine glycosylation occurs at asparagine 130. The chain crosses the membrane as a helical span at residues 239–259; sequence ALLVLALLFFGAAAGLGFCYV. Over 260-322 the chain is Cytoplasmic; the sequence is KRYVKAFPFT…TTVRCLEAEV (63 aa). The segment covering 279–309 has biased composition (basic and acidic residues); the sequence is ETKVVKEEKANDSNPNEESKKTDKNPEESKS. Positions 279 to 322 are disordered; that stretch reads ETKVVKEEKANDSNPNEESKKTDKNPEESKSPSKTTVRCLEAEV.

Homodimer; disulfide-linked. Interacts with PDGFB and IGFBP3. Forms a transient ternary complex with PDGFB and PDGFRB in TGN. In terms of processing, O-glycosylated. In terms of tissue distribution, mainly expressed in endothelial cells lining lymphatic vessels.

The protein resides in the cell membrane. Functionally, ligand-specific transporter trafficking between intracellular organelles (TGN) and the plasma membrane. Plays a role in autocrine regulation of cell growth mediated by growth regulators containing cell surface retention sequence binding (CRS). May act as a hyaluronan (HA) transporter, either mediating its uptake for catabolism within lymphatic endothelial cells themselves, or its transport into the lumen of afferent lymphatic vessels for subsequent re-uptake and degradation in lymph nodes. Binds to pericelluar hyaluronan matrices deposited on the surface of leukocytes and facilitates cell adhesion and migration through lymphatic endothelium. This chain is Lymphatic vessel endothelial hyaluronic acid receptor 1 (LYVE1), found in Homo sapiens (Human).